We begin with the raw amino-acid sequence, 290 residues long: MAPQSTKFALITGCGAGGIGEALILEYLRRGIHPIATLLPFESSEHLDKAGITWFKLDVTNEESVVQLKKDVSELTKGRLDFLVNNAGICYTMTAIDTDVKSVQRMFDVNLFGPMRMVHHFHDMLIASSGIIVNIGSIGGVVPFVYGSSYNASKAALAHWGNSLRVELAPLGVRVLVIISGEVGTNILKNDHGRTLPEGSYYSPMAEEFKNHVHRTPDAATDRFVYAKNVVGESLKKSPTTWFWTGSYSGVIRFLHTFFPKTVFDRWFSSLFNLAKLKEAHDAAMKKKVA.

NADP(+)-binding residues include I11, T37, D58, and N86. Residues 125-145 (LIASSGIIVNIGSIGGVVPFV) traverse the membrane as a helical segment. Y150 is an NADP(+) binding site. Catalysis depends on Y150, which acts as the Proton donor. The N-linked (GlcNAc...) asparagine glycan is linked to N151. Residues K154, V183, and T185 each coordinate NADP(+). K154 (lowers pKa of active site Tyr) is an active-site residue.

This sequence belongs to the short-chain dehydrogenases/reductases (SDR) family.

Its subcellular location is the membrane. In terms of biological role, short-chain dehydrogenase; part of the gene cluster that mediates the biosynthesis of sordarial, a salicylic aldehyde structurally related to the phytotoxin pyriculol. The most interesting aspect of this pathway is formation of an aromatic product from the highly reducing polyketide synthase srdA. SrdA synthesizes a reduced polyketide chain from one molecule of acetyl-CoA and five molecules of malonyl-CoA. The polyketide chain is then reductively released as an aldehyde. The oxidoreductases srdC, srdD and srdE then oxidize one of the hydroxy groups to facilitate the intramolecular aldol condensation, followed by dehydration to yield a salicylic aldehyde. This aldehyde can undergo facile reduction by endogenous reductases to yield the alcohol 1-hydroxy-2-hydroxymethyl-3-pent-1,3-dienylbenzene. The flavin-dependent srdI counteract against the propensity of the aldehydes to be reduced under physiological conditions and is responsible for reoxidizing 1-hydroxy-2-hydroxymethyl-3-pent-1,3-dienylbenzene back to the salicylic aldehyde. This salicylic aldehyde is then selectively epoxidized by the cupin-domain-containing oxidoreductase srdB to yield the epoxide, which can be hydrolyzed stereoselectively by the hydrolase srdG to give the final product sordarial. The chain is Short-chain dehydrogenase srdE from Neurospora crassa (strain ATCC 24698 / 74-OR23-1A / CBS 708.71 / DSM 1257 / FGSC 987).